The chain runs to 210 residues: HTH-type transcriptional repressor FabR (210 aa).

An HTH tetR-type domain is found at 10 to 70 (KTRRSLVEAA…TMVDESGLML (61 aa)). Residues 33–52 (SLREVAREAGIAPTSFYRHF) constitute a DNA-binding region (H-T-H motif).

Homodimer.

The protein resides in the cytoplasm. Its function is as follows. Represses the transcription of fabB, involved in unsaturated fatty acid (UFA) biosynthesis. By controlling UFA production, FabR directly influences the physical properties of the membrane bilayer. This is HTH-type transcriptional repressor FabR from Citrobacter koseri (strain ATCC BAA-895 / CDC 4225-83 / SGSC4696).